The primary structure comprises 134 residues: 6,7-dimethyl-8-ribityllumazine synthase (134 aa).

5-amino-6-(D-ribitylamino)uracil contacts are provided by residues Phe12, 44–46, and 68–70; these read VFD and SVI. 73–74 lines the (2S)-2-hydroxy-3-oxobutyl phosphate pocket; it reads DT. His76 (proton donor) is an active-site residue. Residue Leu101 participates in 5-amino-6-(D-ribitylamino)uracil binding. Arg116 is a (2S)-2-hydroxy-3-oxobutyl phosphate binding site.

It belongs to the DMRL synthase family.

It catalyses the reaction (2S)-2-hydroxy-3-oxobutyl phosphate + 5-amino-6-(D-ribitylamino)uracil = 6,7-dimethyl-8-(1-D-ribityl)lumazine + phosphate + 2 H2O + H(+). The protein operates within cofactor biosynthesis; riboflavin biosynthesis; riboflavin from 2-hydroxy-3-oxobutyl phosphate and 5-amino-6-(D-ribitylamino)uracil: step 1/2. Its function is as follows. Catalyzes the formation of 6,7-dimethyl-8-ribityllumazine by condensation of 5-amino-6-(D-ribitylamino)uracil with 3,4-dihydroxy-2-butanone 4-phosphate. This is the penultimate step in the biosynthesis of riboflavin. The protein is 6,7-dimethyl-8-ribityllumazine synthase of Methanosarcina barkeri (strain Fusaro / DSM 804).